A 208-amino-acid polypeptide reads, in one-letter code: 3-demethoxyubiquinol 3-hydroxylase (208 aa).

E57, E87, H90, E139, E171, and H174 together coordinate Fe cation.

This sequence belongs to the COQ7 family. Requires Fe cation as cofactor.

The protein resides in the cell membrane. It catalyses the reaction a 5-methoxy-2-methyl-3-(all-trans-polyprenyl)benzene-1,4-diol + AH2 + O2 = a 3-demethylubiquinol + A + H2O. Its pathway is cofactor biosynthesis; ubiquinone biosynthesis. In terms of biological role, catalyzes the hydroxylation of 2-nonaprenyl-3-methyl-6-methoxy-1,4-benzoquinol during ubiquinone biosynthesis. This chain is 3-demethoxyubiquinol 3-hydroxylase, found in Burkholderia cenocepacia (strain HI2424).